The sequence spans 503 residues: Maturase K (503 aa).

It belongs to the intron maturase 2 family. MatK subfamily.

It is found in the plastid. The protein resides in the chloroplast. Usually encoded in the trnK tRNA gene intron. Probably assists in splicing its own and other chloroplast group II introns. This Rosa rugosa (Rugosa rose) protein is Maturase K.